The sequence spans 530 residues: GMP synthase [glutamine-hydrolyzing] (530 aa).

The Glutamine amidotransferase type-1 domain maps to 18–207; the sequence is TILVLDFGSQ…AVDICQAKTN (190 aa). C94 (nucleophile) is an active-site residue. Residues H181 and E183 contribute to the active site. The GMPS ATP-PPase domain occupies 208–405; that stretch reads WSMENFIDTE…LGVPEDLVWR (198 aa). An ATP-binding site is contributed by 236–242; that stretch reads SGGVDST. Residues R309, D467, K522, and E528 each coordinate XMP.

As to quaternary structure, homodimer. It depends on Mg(2+) as a cofactor.

The protein localises to the cytoplasm. It is found in the cytosol. It carries out the reaction XMP + L-glutamine + ATP + H2O = GMP + L-glutamate + AMP + diphosphate + 2 H(+). Its pathway is purine metabolism; GMP biosynthesis; GMP from XMP (L-Gln route): step 1/1. Its function is as follows. Catalyzes the conversion of xanthine monophosphate (XMP) to GMP in the presence of glutamine and ATP through an adenyl-XMP intermediate. This is GMP synthase [glutamine-hydrolyzing] (GUA1) from Candida albicans (strain SC5314 / ATCC MYA-2876) (Yeast).